We begin with the raw amino-acid sequence, 347 residues long: NADH-ubiquinone oxidoreductase chain 2 (347 aa).

The next 11 helical transmembrane spans lie at 1 to 21, 25 to 45, 68 to 88, 96 to 116, 122 to 142, 145 to 165, 178 to 198, 201 to 221, 239 to 259, 274 to 294, and 326 to 346; these read MNPM…SIVL, HWFL…PVLM, MILV…TIMI, MLIT…FWVP, VSLS…LSLL, IFPS…IMIG, IMAY…IYNP, SLLN…LLII, IVVS…PLTG, SSVM…FFYM, and MMSL…LITL.

It belongs to the complex I subunit 2 family. In terms of assembly, core subunit of respiratory chain NADH dehydrogenase (Complex I) which is composed of 45 different subunits. Interacts with TMEM242.

It is found in the mitochondrion inner membrane. It carries out the reaction a ubiquinone + NADH + 5 H(+)(in) = a ubiquinol + NAD(+) + 4 H(+)(out). In terms of biological role, core subunit of the mitochondrial membrane respiratory chain NADH dehydrogenase (Complex I) which catalyzes electron transfer from NADH through the respiratory chain, using ubiquinone as an electron acceptor. Essential for the catalytic activity and assembly of complex I. The protein is NADH-ubiquinone oxidoreductase chain 2 of Sylvisorex lunaris (Moon forest shrew).